A 142-amino-acid chain; its full sequence is Nucleoside diphosphate kinase (142 aa).

Residues Lys-11, Phe-59, Arg-87, Thr-93, Arg-104, and Asn-114 each coordinate ATP. His-117 acts as the Pros-phosphohistidine intermediate in catalysis.

It belongs to the NDK family. Homotetramer. The cofactor is Mg(2+).

The protein resides in the cytoplasm. The enzyme catalyses a 2'-deoxyribonucleoside 5'-diphosphate + ATP = a 2'-deoxyribonucleoside 5'-triphosphate + ADP. The catalysed reaction is a ribonucleoside 5'-diphosphate + ATP = a ribonucleoside 5'-triphosphate + ADP. Functionally, major role in the synthesis of nucleoside triphosphates other than ATP. The ATP gamma phosphate is transferred to the NDP beta phosphate via a ping-pong mechanism, using a phosphorylated active-site intermediate. The chain is Nucleoside diphosphate kinase from Yersinia pseudotuberculosis serotype O:1b (strain IP 31758).